A 461-amino-acid chain; its full sequence is Serine incorporator 5 (461 aa).

Topologically, residues 1 to 36 (MSARCCAGQLACCCGSAGCSLCCGCCPKFRQSRTTR) are extracellular. A helical transmembrane segment spans residues 37-57 (FMYLFYFILVIALCCVMMTPS). At 58-90 (VMKQVKDHIPFFEEFCKKTQAGGDACENLVGYS) the chain is on the cytoplasmic side. Residues 91–111 (AVYRVCFGMACFFALFCLLTL) form a helical membrane-spanning segment. The Extracellular portion of the chain corresponds to 112–125 (KVNNSKSCRAYIHN). Asparagine 114 carries an N-linked (GlcNAc...) asparagine glycan. The helical transmembrane segment at 126 to 146 (GFWFFKLLLLGAMCSGAFFIP) threads the bilayer. The Cytoplasmic portion of the chain corresponds to 147–157 (DQETFLKVWRY). The helical transmembrane segment at 158-178 (VGAGGSFLFICIQLLLIVQFA) threads the bilayer. Over 179–200 (HKWNKNWTAGTVRNKLWYASLS) the chain is Extracellular. N-linked (GlcNAc...) asparagine glycosylation is present at asparagine 184. A helical transmembrane segment spans residues 201–221 (LVTLIMYSVAVGGLALMAVFY). The Cytoplasmic portion of the chain corresponds to 222 to 231 (TQWDDCMDNK). The helical transmembrane segment at 232–252 (ILLGVHGGLCVLISLVAISPC) threads the bilayer. Residues 253-260 (VQNRQPHS) lie on the Extracellular side of the membrane. Residues 261–281 (GLLQSGLISCYVTYLTFSALT) form a helical membrane-spanning segment. Residues 282-312 (SKPEKKVLDEHGKNVTICAPDFGQDLHRDEN) are Cytoplasmic-facing. A helical membrane pass occupies residues 313–333 (MVTWLGTLLLIVCISYSCLTS). Topologically, residues 334-392 (TTRSSSDALQSRYGAPELEVARCCFCFGPDGEDTEEQQNVKKGPRVIYDEKKGTVYSYS) are extracellular. The helical transmembrane segment at 393 to 413 (YFHFVFFLASLYVMMTLTSWF) threads the bilayer. Residues 414 to 422 (HYENATIKT) lie on the Cytoplasmic side of the membrane. A helical membrane pass occupies residues 423-443 (FFSGWSVFWVKMASCWMCVLL). Over 444–461 (YLQTLVAPLCCPSRQFSV) the chain is Extracellular.

It belongs to the TDE1 family.

The protein localises to the cell membrane. The catalysed reaction is a 1,2-diacyl-sn-glycero-3-phospho-L-serine(in) = a 1,2-diacyl-sn-glycero-3-phospho-L-serine(out). It catalyses the reaction a 1,2-diacyl-sn-glycero-3-phosphocholine(in) = a 1,2-diacyl-sn-glycero-3-phosphocholine(out). The enzyme catalyses a 1,2-diacyl-sn-glycero-3-phosphoethanolamine(in) = a 1,2-diacyl-sn-glycero-3-phosphoethanolamine(out). In terms of biological role, restriction factor required to restrict infectivity of gammaretroviruses: acts by inhibiting an early step of viral infection. Impairs the penetration of the viral particle into the cytoplasm. Non-ATP-dependent, non-specific lipid transporter for phosphatidylserine, phosphatidylcholine, and phosphatidylethanolamine. Functions as a scramblase that flips lipids in both directions across the membrane. Phospholipid scrambling results in gammaretroviral surface exposure of phosphatidylserine and loss of membrane asymmetry, which leads to loss of infectivity. Enhances the incorporation of serine into phosphatidylserine and sphingolipids. May play a role in providing serine molecules for the formation of myelin glycosphingolipids in oligodendrocytes. This is Serine incorporator 5 (Serinc5) from Mus musculus (Mouse).